We begin with the raw amino-acid sequence, 91 residues long: Small ribosomal subunit protein bS20 (91 aa).

It belongs to the bacterial ribosomal protein bS20 family.

Functionally, binds directly to 16S ribosomal RNA. The sequence is that of Small ribosomal subunit protein bS20 from Acidithiobacillus ferrooxidans (strain ATCC 23270 / DSM 14882 / CIP 104768 / NCIMB 8455) (Ferrobacillus ferrooxidans (strain ATCC 23270)).